The chain runs to 216 residues: Protein-L-isoaspartate O-methyltransferase (216 aa).

S63 is an active-site residue.

Belongs to the methyltransferase superfamily. L-isoaspartyl/D-aspartyl protein methyltransferase family.

The protein resides in the cytoplasm. The enzyme catalyses [protein]-L-isoaspartate + S-adenosyl-L-methionine = [protein]-L-isoaspartate alpha-methyl ester + S-adenosyl-L-homocysteine. Its function is as follows. Catalyzes the methyl esterification of L-isoaspartyl residues in peptides and proteins that result from spontaneous decomposition of normal L-aspartyl and L-asparaginyl residues. It plays a role in the repair and/or degradation of damaged proteins. The polypeptide is Protein-L-isoaspartate O-methyltransferase (Rhodopseudomonas palustris (strain BisB18)).